The following is a 232-amino-acid chain: Large ribosomal subunit protein uL1 (232 aa).

This sequence belongs to the universal ribosomal protein uL1 family. As to quaternary structure, part of the 50S ribosomal subunit.

Binds directly to 23S rRNA. The L1 stalk is quite mobile in the ribosome, and is involved in E site tRNA release. Its function is as follows. Protein L1 is also a translational repressor protein, it controls the translation of the L11 operon by binding to its mRNA. The sequence is that of Large ribosomal subunit protein uL1 from Cereibacter sphaeroides (strain ATCC 17025 / ATH 2.4.3) (Rhodobacter sphaeroides).